Reading from the N-terminus, the 455-residue chain is Bifunctional protein GlmU (455 aa).

Positions 1–227 (MDSLSIVILA…SWEAAGVNNK (227 aa)) are pyrophosphorylase. UDP-N-acetyl-alpha-D-glucosamine is bound by residues 9-12 (LAAG), lysine 23, glutamine 74, 79-80 (GT), 101-103 (YGD), glycine 137, glutamate 152, asparagine 167, and asparagine 225. A Mg(2+)-binding site is contributed by aspartate 103. Residue asparagine 225 coordinates Mg(2+). The tract at residues 228 to 248 (VQLAELERILQANQARALLEA) is linker. The N-acetyltransferase stretch occupies residues 249 to 455 (GVTLADPARI…GWKRPQKKSG (207 aa)). Positions 331 and 349 each coordinate UDP-N-acetyl-alpha-D-glucosamine. Residue histidine 361 is the Proton acceptor of the active site. The UDP-N-acetyl-alpha-D-glucosamine site is built by tyrosine 364 and asparagine 375. Acetyl-CoA contacts are provided by residues alanine 378, 384–385 (NY), serine 403, alanine 421, and arginine 438.

In the N-terminal section; belongs to the N-acetylglucosamine-1-phosphate uridyltransferase family. It in the C-terminal section; belongs to the transferase hexapeptide repeat family. Homotrimer. The cofactor is Mg(2+).

The protein resides in the cytoplasm. It carries out the reaction alpha-D-glucosamine 1-phosphate + acetyl-CoA = N-acetyl-alpha-D-glucosamine 1-phosphate + CoA + H(+). It catalyses the reaction N-acetyl-alpha-D-glucosamine 1-phosphate + UTP + H(+) = UDP-N-acetyl-alpha-D-glucosamine + diphosphate. The protein operates within nucleotide-sugar biosynthesis; UDP-N-acetyl-alpha-D-glucosamine biosynthesis; N-acetyl-alpha-D-glucosamine 1-phosphate from alpha-D-glucosamine 6-phosphate (route II): step 2/2. It functions in the pathway nucleotide-sugar biosynthesis; UDP-N-acetyl-alpha-D-glucosamine biosynthesis; UDP-N-acetyl-alpha-D-glucosamine from N-acetyl-alpha-D-glucosamine 1-phosphate: step 1/1. It participates in bacterial outer membrane biogenesis; LPS lipid A biosynthesis. Functionally, catalyzes the last two sequential reactions in the de novo biosynthetic pathway for UDP-N-acetylglucosamine (UDP-GlcNAc). The C-terminal domain catalyzes the transfer of acetyl group from acetyl coenzyme A to glucosamine-1-phosphate (GlcN-1-P) to produce N-acetylglucosamine-1-phosphate (GlcNAc-1-P), which is converted into UDP-GlcNAc by the transfer of uridine 5-monophosphate (from uridine 5-triphosphate), a reaction catalyzed by the N-terminal domain. This chain is Bifunctional protein GlmU, found in Chromobacterium violaceum (strain ATCC 12472 / DSM 30191 / JCM 1249 / CCUG 213 / NBRC 12614 / NCIMB 9131 / NCTC 9757 / MK).